The sequence spans 556 residues: 2-succinyl-5-enolpyruvyl-6-hydroxy-3-cyclohexene-1-carboxylate synthase (556 aa).

It belongs to the TPP enzyme family. MenD subfamily. Homodimer. The cofactor is Mg(2+). It depends on Mn(2+) as a cofactor. Thiamine diphosphate serves as cofactor.

The catalysed reaction is isochorismate + 2-oxoglutarate + H(+) = 5-enolpyruvoyl-6-hydroxy-2-succinyl-cyclohex-3-ene-1-carboxylate + CO2. It participates in quinol/quinone metabolism; 1,4-dihydroxy-2-naphthoate biosynthesis; 1,4-dihydroxy-2-naphthoate from chorismate: step 2/7. It functions in the pathway quinol/quinone metabolism; menaquinone biosynthesis. In terms of biological role, catalyzes the thiamine diphosphate-dependent decarboxylation of 2-oxoglutarate and the subsequent addition of the resulting succinic semialdehyde-thiamine pyrophosphate anion to isochorismate to yield 2-succinyl-5-enolpyruvyl-6-hydroxy-3-cyclohexene-1-carboxylate (SEPHCHC). This is 2-succinyl-5-enolpyruvyl-6-hydroxy-3-cyclohexene-1-carboxylate synthase from Escherichia coli O7:K1 (strain IAI39 / ExPEC).